A 234-amino-acid chain; its full sequence is Adenosine 5'-phosphosulfate reductase (234 aa).

4 residues coordinate [4Fe-4S] cluster: cysteine 120, cysteine 121, cysteine 203, and cysteine 206. Catalysis depends on cysteine 229, which acts as the Nucleophile; cysteine thiosulfonate intermediate.

It belongs to the PAPS reductase family. CysH subfamily. [4Fe-4S] cluster is required as a cofactor.

It localises to the cytoplasm. The catalysed reaction is [thioredoxin]-disulfide + sulfite + AMP + 2 H(+) = adenosine 5'-phosphosulfate + [thioredoxin]-dithiol. It participates in sulfur metabolism; hydrogen sulfide biosynthesis; sulfite from sulfate. Catalyzes the formation of sulfite from adenosine 5'-phosphosulfate (APS) using thioredoxin as an electron donor. This Bacillus mycoides (strain KBAB4) (Bacillus weihenstephanensis) protein is Adenosine 5'-phosphosulfate reductase.